A 341-amino-acid chain; its full sequence is NADH-quinone oxidoreductase subunit H (341 aa).

8 helical membrane passes run 38 to 58 (PSVVGPFGLLQPFADAIKLLV), 70 to 90 (ILFIMAPMLTFILALIVWAVI), 115 to 135 (IGVLYVLAISSLGIYGIIVAG), 161 to 181 (MGLIVATVVITTGTLNLGEMV), 187 to 207 (MPFWIDLLMMPIGVVFFISLL), 239 to 259 (LFFLGEYANMILGSAMMTIFF), 275 to 295 (IPGLIWFVLKIVLLLFIFVWT), and 314 to 334 (VFLPISVLWVILISGVLLFTG).

This sequence belongs to the complex I subunit 1 family. In terms of assembly, NDH-1 is composed of 14 different subunits. Subunits NuoA, H, J, K, L, M, N constitute the membrane sector of the complex.

It is found in the cell membrane. It carries out the reaction a quinone + NADH + 5 H(+)(in) = a quinol + NAD(+) + 4 H(+)(out). NDH-1 shuttles electrons from NADH, via FMN and iron-sulfur (Fe-S) centers, to quinones in the respiratory chain. The immediate electron acceptor for the enzyme in this species is believed to be ubiquinone. Couples the redox reaction to proton translocation (for every two electrons transferred, four hydrogen ions are translocated across the cytoplasmic membrane), and thus conserves the redox energy in a proton gradient. This subunit may bind ubiquinone. The polypeptide is NADH-quinone oxidoreductase subunit H (Wolbachia sp. subsp. Brugia malayi (strain TRS)).